The following is a 159-amino-acid chain: Ribosomal RNA large subunit methyltransferase H (159 aa).

Glycine 108 is a binding site for S-adenosyl-L-methionine.

Belongs to the RNA methyltransferase RlmH family. In terms of assembly, homodimer.

Its subcellular location is the cytoplasm. It catalyses the reaction pseudouridine(1915) in 23S rRNA + S-adenosyl-L-methionine = N(3)-methylpseudouridine(1915) in 23S rRNA + S-adenosyl-L-homocysteine + H(+). Specifically methylates the pseudouridine at position 1915 (m3Psi1915) in 23S rRNA. In Lactobacillus johnsonii (strain CNCM I-12250 / La1 / NCC 533), this protein is Ribosomal RNA large subunit methyltransferase H.